The primary structure comprises 257 residues: NAD-capped RNA hydrolase NudC (257 aa).

Residues Lys-25 and Arg-69 each contribute to the substrate site. 2 residues coordinate Zn(2+): Cys-98 and Cys-101. Residue Glu-111 participates in substrate binding. Zn(2+) is bound by residues Cys-116 and Cys-119. Residue Tyr-124 coordinates substrate. The Nudix hydrolase domain occupies 125–248 (PQIAPCIIVA…TVARRLIEDT (124 aa)). The a divalent metal cation site is built by Ala-158, Glu-174, and Glu-178. The Nudix box motif lies at 159-180 (GFVEVGETLEQAVAREVMEESG). 192 to 199 (QPWPFPQS) lines the substrate pocket. Glu-219 lines the a divalent metal cation pocket. Ala-241 lines the substrate pocket.

The protein belongs to the Nudix hydrolase family. NudC subfamily. In terms of assembly, homodimer. Mg(2+) serves as cofactor. Mn(2+) is required as a cofactor. It depends on Zn(2+) as a cofactor.

The enzyme catalyses a 5'-end NAD(+)-phospho-ribonucleoside in mRNA + H2O = a 5'-end phospho-adenosine-phospho-ribonucleoside in mRNA + beta-nicotinamide D-ribonucleotide + 2 H(+). It catalyses the reaction NAD(+) + H2O = beta-nicotinamide D-ribonucleotide + AMP + 2 H(+). It carries out the reaction NADH + H2O = reduced beta-nicotinamide D-ribonucleotide + AMP + 2 H(+). Its function is as follows. mRNA decapping enzyme that specifically removes the nicotinamide adenine dinucleotide (NAD) cap from a subset of mRNAs by hydrolyzing the diphosphate linkage to produce nicotinamide mononucleotide (NMN) and 5' monophosphate mRNA. The NAD-cap is present at the 5'-end of some mRNAs and stabilizes RNA against 5'-processing. Has preference for mRNAs with a 5'-end purine. Catalyzes the hydrolysis of a broad range of dinucleotide pyrophosphates. In Shigella dysenteriae serotype 1 (strain Sd197), this protein is NAD-capped RNA hydrolase NudC.